The sequence spans 282 residues: Pantothenate synthetase (282 aa).

ATP is bound at residue 30 to 37; that stretch reads MGYLHEGH. His37 acts as the Proton donor in catalysis. Gln61 serves as a coordination point for (R)-pantoate. Gln61 contacts beta-alanine. 147-150 is a binding site for ATP; the sequence is GMKD. Gln153 serves as a coordination point for (R)-pantoate. ATP contacts are provided by residues Val176 and 184 to 187; that span reads KSSR.

The protein belongs to the pantothenate synthetase family. As to quaternary structure, homodimer.

It localises to the cytoplasm. It catalyses the reaction (R)-pantoate + beta-alanine + ATP = (R)-pantothenate + AMP + diphosphate + H(+). It participates in cofactor biosynthesis; (R)-pantothenate biosynthesis; (R)-pantothenate from (R)-pantoate and beta-alanine: step 1/1. Catalyzes the condensation of pantoate with beta-alanine in an ATP-dependent reaction via a pantoyl-adenylate intermediate. The polypeptide is Pantothenate synthetase (Bacillus thuringiensis (strain Al Hakam)).